A 376-amino-acid chain; its full sequence is Chaperone protein DnaJ (376 aa).

One can recognise a J domain in the interval 5–70; the sequence is DFYEVLGVER…SKRAAYDQYG (66 aa). A CR-type zinc finger spans residues 135 to 213; the sequence is GTTVTIRVPT…CHGQGRVEEQ (79 aa). 8 residues coordinate Zn(2+): Cys148, Cys151, Cys165, Cys168, Cys187, Cys190, Cys201, and Cys204. CXXCXGXG motif repeat units follow at residues 148-155, 165-172, 187-194, and 201-208; these read CKTCDGSG, CTTCGGIG, CPRCHGSG, and CGSCHGQG.

It belongs to the DnaJ family. As to quaternary structure, homodimer. Zn(2+) serves as cofactor.

The protein resides in the cytoplasm. Participates actively in the response to hyperosmotic and heat shock by preventing the aggregation of stress-denatured proteins and by disaggregating proteins, also in an autonomous, DnaK-independent fashion. Unfolded proteins bind initially to DnaJ; upon interaction with the DnaJ-bound protein, DnaK hydrolyzes its bound ATP, resulting in the formation of a stable complex. GrpE releases ADP from DnaK; ATP binding to DnaK triggers the release of the substrate protein, thus completing the reaction cycle. Several rounds of ATP-dependent interactions between DnaJ, DnaK and GrpE are required for fully efficient folding. Also involved, together with DnaK and GrpE, in the DNA replication of plasmids through activation of initiation proteins. This chain is Chaperone protein DnaJ, found in Stutzerimonas stutzeri (Pseudomonas stutzeri).